Reading from the N-terminus, the 131-residue chain is Small ribosomal subunit protein uS8 (131 aa).

Residues 1 to 27 (MSMTDPVADMLTRIRNGQRASKNEVSM) are disordered.

Belongs to the universal ribosomal protein uS8 family. As to quaternary structure, part of the 30S ribosomal subunit. Contacts proteins S5 and S12.

Its function is as follows. One of the primary rRNA binding proteins, it binds directly to 16S rRNA central domain where it helps coordinate assembly of the platform of the 30S subunit. The chain is Small ribosomal subunit protein uS8 from Thioalkalivibrio sulfidiphilus (strain HL-EbGR7).